The following is a 419-amino-acid chain: CDP-diacylglycerol--serine O-phosphatidyltransferase 3 (419 aa).

The tract at residues 1-51 is disordered; sequence MPVRRRWYPPSSTAAQPSPDGGDVNTDDADACPSSRQQRPPSLPQHSAPIH. Residues 33–47 are compositionally biased toward low complexity; it reads PSSRQQRPPSLPQHS. The next 7 helical transmembrane spans lie at 103 to 123, 142 to 162, 168 to 188, 260 to 280, 287 to 307, 359 to 379, and 384 to 404; these read PHTV…SGVL, WAMI…TILI, VWRL…FLLF, LLLW…RHML, WWDS…WAGM, FIQV…TFFL, and WIPP…LIAI.

This sequence belongs to the CDP-alcohol phosphatidyltransferase class-I family.

It localises to the endoplasmic reticulum membrane. It catalyses the reaction a CDP-1,2-diacyl-sn-glycerol + L-serine = a 1,2-diacyl-sn-glycero-3-phospho-L-serine + CMP + H(+). The protein operates within phospholipid metabolism; phosphatidylethanolamine biosynthesis; phosphatidylethanolamine from CDP-diacylglycerol: step 1/2. Functionally, catalyzes a base-exchange reaction in which the polar head group of phosphatidylethanolamine (PE) or phosphatidylcholine (PC) is replaced by L-serine. The chain is CDP-diacylglycerol--serine O-phosphatidyltransferase 3 (PSS3) from Oryza sativa subsp. japonica (Rice).